The sequence spans 178 residues: NADH-quinone oxidoreductase subunit B (178 aa).

4 residues coordinate [4Fe-4S] cluster: C45, C46, C111, and C140.

The protein belongs to the complex I 20 kDa subunit family. As to quaternary structure, NDH-1 is composed of 15 different subunits. Subunits NuoB, C, D, E, F, and G constitute the peripheral sector of the complex. It depends on [4Fe-4S] cluster as a cofactor.

The protein localises to the cell membrane. It carries out the reaction a quinone + NADH + 5 H(+)(in) = a quinol + NAD(+) + 4 H(+)(out). Functionally, NDH-1 shuttles electrons from NADH, via FMN and iron-sulfur (Fe-S) centers, to quinones in the respiratory chain. The immediate electron acceptor for the enzyme in this species is believed to be a menaquinone. Couples the redox reaction to proton translocation (for every two electrons transferred, four hydrogen ions are translocated across the cytoplasmic membrane), and thus conserves the redox energy in a proton gradient. This is NADH-quinone oxidoreductase subunit B from Deinococcus geothermalis (strain DSM 11300 / CIP 105573 / AG-3a).